Here is a 382-residue protein sequence, read N- to C-terminus: S-adenosylmethionine synthase (382 aa).

His16 is an ATP binding site. Residue Asp18 coordinates Mg(2+). Residue Glu44 participates in K(+) binding. L-methionine-binding residues include Glu57 and Gln100. Residues 100 to 110 (QSPDIAQGVDN) are flexible loop. ATP-binding positions include 165 to 167 (DAK), 231 to 232 (RF), Asp240, 246 to 247 (RK), and Lys267. L-methionine is bound at residue Asp240. Lys271 provides a ligand contact to L-methionine.

This sequence belongs to the AdoMet synthase family. Homotetramer; dimer of dimers. Mg(2+) is required as a cofactor. K(+) serves as cofactor.

It is found in the cytoplasm. The enzyme catalyses L-methionine + ATP + H2O = S-adenosyl-L-methionine + phosphate + diphosphate. The protein operates within amino-acid biosynthesis; S-adenosyl-L-methionine biosynthesis; S-adenosyl-L-methionine from L-methionine: step 1/1. Functionally, catalyzes the formation of S-adenosylmethionine (AdoMet) from methionine and ATP. The overall synthetic reaction is composed of two sequential steps, AdoMet formation and the subsequent tripolyphosphate hydrolysis which occurs prior to release of AdoMet from the enzyme. The polypeptide is S-adenosylmethionine synthase (Legionella pneumophila subsp. pneumophila (strain Philadelphia 1 / ATCC 33152 / DSM 7513)).